Here is a 412-residue protein sequence, read N- to C-terminus: MSPSAISSEYSNCNGTPDYALQSSEVSNFNGYDHVTWWVGNAKQAASYYNTVFGFKTLAYRGLETGSRYFASYVVGNADVRFVFTSPIRSQKCLPEEEPISDADRKLLQECHEHLEKHGDAVKDVAFEVDNVDGVFHKAVAAGADVVQEPTTLTDKMHGSVRTAVIRTYGDTTHTLISRADYNGPFLPGFRTAAPSSATVQLPSVPLARIDHCVGNQDWNEMVSACAFYEQCLSFHRFWSVDDSQICTEFSALNSIVMASENNLVKMPINEPAPGKKKSQIEEYVVFNSGAGVQHIALLTPDIISTVSAMRARGVEFINVPSTYYDTIRQRLKTEKRGWELKEDLDTIQKLNILIDYDEGGYLLQLFTKPLMDRPTVFIEIIQRNNFEGFGAGNFKSLFEAIEREQAERGNL.

VOC domains lie at 31 to 179 and 209 to 369; these read GYDH…LISR and RIDH…LFTK. The Fe cation site is built by H212, H295, and E380.

The protein belongs to the 4HPPD family. It depends on Fe cation as a cofactor.

The enzyme catalyses 3-(4-hydroxyphenyl)pyruvate + O2 = homogentisate + CO2. The protein operates within amino-acid degradation; L-phenylalanine degradation; acetoacetate and fumarate from L-phenylalanine: step 3/6. The polypeptide is 4-hydroxyphenylpyruvate dioxygenase (Neurospora crassa (strain ATCC 24698 / 74-OR23-1A / CBS 708.71 / DSM 1257 / FGSC 987)).